We begin with the raw amino-acid sequence, 214 residues long: Large ribosomal subunit protein uL3 (214 aa).

N5-methylglutamine is present on Gln151.

It belongs to the universal ribosomal protein uL3 family. Part of the 50S ribosomal subunit. Forms a cluster with proteins L14 and L19. Post-translationally, methylated by PrmB.

Its function is as follows. One of the primary rRNA binding proteins, it binds directly near the 3'-end of the 23S rRNA, where it nucleates assembly of the 50S subunit. This Magnetococcus marinus (strain ATCC BAA-1437 / JCM 17883 / MC-1) protein is Large ribosomal subunit protein uL3.